The following is a 488-amino-acid chain: MERRKIMKITINYGKRLGKINKFWAKCVGSCHATTALREDWRKQLKKCRDELGFEYIRFHGWLNDDMSVCFRNDDGLLSFSFFNIDSIIDFLLEIGMKPFIELSFMPEALASGTKTVFHYKGNITPPKSYEEWGQLIEELARHLISRYGKNEVREWFFEVWNEPNLKDFFWAGTMEEYFKLYKYAAFAIKKVDSELRVGGPATAIDAWIPELKDFCTKNGVPIDFISTHQYPTDLAFSTSSNMEEAMAKAKRGELAERVKKALEEAYPLPVYYTEWNNSPSPRDPYHDIPYDAAFIVKTIIDIIDLPLGCYSYWTFTDIFEECGQSSLPFHGGFGLLNIHGIPKPSYRAFQILDKLNGERIEIEFEDKSPTIDCIAVQNEREIILVISNHNVPLSPIDTENIKVVLKGIENCREVFVERIDEYNANPKRVWLEMGSPAYLNREQIEELIKASELKKEKVSWGIVNNNEITFDLSVLPHSVVAVTIKNG.

Glu163 functions as the Proton donor in the catalytic mechanism. Glu275 acts as the Nucleophile in catalysis.

It belongs to the glycosyl hydrolase 39 family.

It catalyses the reaction Hydrolysis of (1-&gt;4)-beta-D-xylans, to remove successive D-xylose residues from the non-reducing termini.. In terms of biological role, beta-xylosidase is an intracellular xylan-degrading enzyme. The protein is Beta-xylosidase (xynB) of Caldicellulosiruptor saccharolyticus (Caldocellum saccharolyticum).